Reading from the N-terminus, the 338-residue chain is Lipoate-protein ligase A (338 aa).

Residues 29 to 216 (PATQRVLFLW…AFFAHYGERV (188 aa)) form the BPL/LPL catalytic domain. Residues arginine 71, 76-79 (GAVF), and lysine 134 contribute to the ATP site. Residue lysine 134 coordinates (R)-lipoate.

It belongs to the LplA family. In terms of assembly, monomer.

The protein localises to the cytoplasm. The enzyme catalyses L-lysyl-[lipoyl-carrier protein] + (R)-lipoate + ATP = N(6)-[(R)-lipoyl]-L-lysyl-[lipoyl-carrier protein] + AMP + diphosphate + H(+). It functions in the pathway protein modification; protein lipoylation via exogenous pathway; protein N(6)-(lipoyl)lysine from lipoate: step 1/2. Its pathway is protein modification; protein lipoylation via exogenous pathway; protein N(6)-(lipoyl)lysine from lipoate: step 2/2. Its function is as follows. Catalyzes both the ATP-dependent activation of exogenously supplied lipoate to lipoyl-AMP and the transfer of the activated lipoyl onto the lipoyl domains of lipoate-dependent enzymes. The chain is Lipoate-protein ligase A from Salmonella agona (strain SL483).